The sequence spans 458 residues: 5-hydroxytryptamine receptor 2C (458 aa).

An N-terminal signal peptide occupies residues 1-32; sequence MVNLRKAVHSFLVHLIGLLVWQCDISVSPVAA. Residues 33–55 lie on the Extracellular side of the membrane; it reads LVTDIFNTSDGGRFKFPDGVQNW. Residues 56 to 80 traverse the membrane as a helical segment; sequence PALSIVIIIILTIGGNILVIMAVSL. Over 81 to 86 the chain is Cytoplasmic; the sequence is EKKLHN. The helical transmembrane segment at 87–111 threads the bilayer; it reads ATNYFLMSLAIADMLVGLLVMPLSL. Residues 112–128 are Extracellular-facing; it reads LAILYDYVWPLPRYLCP. Cysteines 127 and 207 form a disulfide. Residues 129–151 form a helical membrane-spanning segment; that stretch reads VWISLDVLFSTASIMHLCAISLD. Position 139 (threonine 139) interacts with ergotamine. The short motif at 151-153 is the DRY motif; important for ligand-induced conformation changes element; sequence DRY. Topologically, residues 152-167 are cytoplasmic; it reads RYVAIRNPVEHSRFNS. The helical transmembrane segment at 168 to 189 threads the bilayer; the sequence is RTKAIMKIAIVWAISIGVSVPI. Over 190 to 213 the chain is Extracellular; it reads PVIGLRDEEKVFVNNTTCVLNDPN. Residues asparagine 203 and asparagine 204 are each glycosylated (N-linked (GlcNAc...) asparagine). An ergotamine-binding site is contributed by leucine 209. A helical transmembrane segment spans residues 214–236; it reads FVLIGSFVAFFIPLTIMVITYCL. Residues 237–311 are Cytoplasmic-facing; that stretch reads TIHVLRRQAL…AINNERKASK (75 aa). Residues 272–301 form a disordered region; the sequence is TEEENSANPNQDSNPRRRKKKERRPRGTMQ. The segment covering 287 to 297 has biased composition (basic residues); the sequence is RRRKKKERRPR. A helical transmembrane segment spans residues 312-336; it reads VLGIVFFVFLVMWCPFFITNILSVL. The cysteines at positions 337 and 341 are disulfide-linked. Residues 337–347 lie on the Extracellular side of the membrane; that stretch reads CGKACNQKLME. A helical transmembrane segment spans residues 348-370; it reads KLLNVFVWIGYVCSGINPLVYTL. Positions 364–368 match the NPxxY motif; important for ligand-induced conformation changes and signaling motif; it reads NPLVY. Residues 371-458 are Cytoplasmic-facing; the sequence is FNKIYRRAFS…SVVSERISSV (88 aa). The PDZ-binding signature appears at 456–458; sequence SSV.

Belongs to the G-protein coupled receptor 1 family. Interacts with MPDZ. Interacts with ARRB2. Interacts with MPP3; this interaction stabilizes the receptor at the plasma membrane and prevents the desensitization of the HTR2C receptor-mediated calcium response.

Its subcellular location is the cell membrane. Its function is as follows. G-protein coupled receptor for 5-hydroxytryptamine (serotonin). Also functions as a receptor for various drugs and psychoactive substances, including ergot alkaloid derivatives, 1-2,5,-dimethoxy-4-iodophenyl-2-aminopropane (DOI) and lysergic acid diethylamide (LSD). Ligand binding causes a conformation change that triggers signaling via guanine nucleotide-binding proteins (G proteins) and modulates the activity of downstream effectors. HTR2C is coupled to G(q)/G(11) G alpha proteins and activates phospholipase C-beta, releasing diacylglycerol (DAG) and inositol 1,4,5-trisphosphate (IP3) second messengers that modulate the activity of phosphatidylinositol 3-kinase and promote the release of Ca(2+) ions from intracellular stores, respectively. Beta-arrestin family members inhibit signaling via G proteins and mediate activation of alternative signaling pathways. Regulates neuronal activity via the activation of short transient receptor potential calcium channels in the brain, and thereby modulates the activation of pro-opiomelanocortin neurons and the release of CRH that then regulates the release of corticosterone. Plays a role in the regulation of appetite and eating behavior, responses to anxiogenic stimuli and stress. Plays a role in insulin sensitivity and glucose homeostasis. The protein is 5-hydroxytryptamine receptor 2C of Canis lupus familiaris (Dog).